Consider the following 266-residue polypeptide: Glutamate racemase (266 aa).

Substrate-binding positions include 9–10 (DS) and 41–42 (YG). The active-site Proton donor/acceptor is cysteine 72. A substrate-binding site is contributed by 73–74 (NT). Cysteine 183 (proton donor/acceptor) is an active-site residue. 184-185 (TH) contacts substrate.

It belongs to the aspartate/glutamate racemases family.

The enzyme catalyses L-glutamate = D-glutamate. The protein operates within cell wall biogenesis; peptidoglycan biosynthesis. Functionally, provides the (R)-glutamate required for cell wall biosynthesis. This Listeria monocytogenes serotype 4a (strain HCC23) protein is Glutamate racemase.